We begin with the raw amino-acid sequence, 241 residues long: Regulatory protein VirG (241 aa).

Positions 3-117 (HVLVIDDDVA…EFLARIRVAL (115 aa)) constitute a Response regulatory domain. A 4-aspartylphosphate modification is found at Asp-52. Residues 129–229 (RRSFYFADWT…ARGAGYFFDA (101 aa)) constitute a DNA-binding region (ompR/PhoB-type).

In terms of processing, phosphorylated by wide host range (WHR) VirA protein.

Its subcellular location is the cytoplasm. VirG is required for the positive regulation of at least two vir loci encoded by the Ri plasmid of A.rhizogenes. The polypeptide is Regulatory protein VirG (virG) (Rhizobium rhizogenes (Agrobacterium rhizogenes)).